A 110-amino-acid chain; its full sequence is Co-chaperonin GroES (110 aa).

Belongs to the GroES chaperonin family. Heptamer of 7 subunits arranged in a ring. Interacts with the chaperonin GroEL.

Its subcellular location is the cytoplasm. Functionally, together with the chaperonin GroEL, plays an essential role in assisting protein folding. The GroEL-GroES system forms a nano-cage that allows encapsulation of the non-native substrate proteins and provides a physical environment optimized to promote and accelerate protein folding. GroES binds to the apical surface of the GroEL ring, thereby capping the opening of the GroEL channel. In Mycoplasma genitalium (strain ATCC 33530 / DSM 19775 / NCTC 10195 / G37) (Mycoplasmoides genitalium), this protein is Co-chaperonin GroES.